Reading from the N-terminus, the 899-residue chain is Translation initiation factor IF-2 (899 aa).

Disordered stretches follow at residues 31-227 (KKAE…ATEQ) and 240-310 (VTTS…GFDK). 2 stretches are compositionally biased toward polar residues: residues 36 to 47 (NVSQTEKQSLLS) and 73 to 87 (STLS…SKSV). Basic and acidic residues-rich tracts occupy residues 101 to 173 (SALE…EKAK), 181 to 219 (AKSE…ETNE), and 247 to 261 (RAAE…ETTG). Residues 296–308 (PQVNAPTSMQQGF) show a composition bias toward polar residues. The tr-type G domain occupies 398-565 (SRAPVVTIMG…AILLQSEILE (168 aa)). Positions 407-414 (GHVDHGKT) are G1. 407 to 414 (GHVDHGKT) lines the GTP pocket. Positions 432–436 (GITQH) are G2. A G3 region spans residues 453–456 (DTPG). GTP is bound by residues 453-457 (DTPGH) and 507-510 (NKID). The segment at 507 to 510 (NKID) is G4. The tract at residues 543-545 (SAK) is G5.

Belongs to the TRAFAC class translation factor GTPase superfamily. Classic translation factor GTPase family. IF-2 subfamily.

It is found in the cytoplasm. In terms of biological role, one of the essential components for the initiation of protein synthesis. Protects formylmethionyl-tRNA from spontaneous hydrolysis and promotes its binding to the 30S ribosomal subunits. Also involved in the hydrolysis of GTP during the formation of the 70S ribosomal complex. This is Translation initiation factor IF-2 from Photobacterium profundum (strain SS9).